Reading from the N-terminus, the 180-residue chain is Isopentenyl-diphosphate Delta-isomerase (180 aa).

Mn(2+) is bound by residues histidine 22 and histidine 28. Residues 26–160 (LKHKAVSVFA…PERFTPWLKI (135 aa)) enclose the Nudix hydrolase domain. Cysteine 62 is an active-site residue. Cysteine 62 is a Mg(2+) binding site. Histidine 64 serves as a coordination point for Mn(2+). Glutamate 82 serves as a coordination point for Mg(2+). Mn(2+) contacts are provided by glutamate 108 and glutamate 110. Glutamate 110 is an active-site residue.

It belongs to the IPP isomerase type 1 family. Requires Mg(2+) as cofactor. The cofactor is Mn(2+).

The protein localises to the cytoplasm. The catalysed reaction is isopentenyl diphosphate = dimethylallyl diphosphate. The protein operates within isoprenoid biosynthesis; dimethylallyl diphosphate biosynthesis; dimethylallyl diphosphate from isopentenyl diphosphate: step 1/1. Catalyzes the 1,3-allylic rearrangement of the homoallylic substrate isopentenyl (IPP) to its highly electrophilic allylic isomer, dimethylallyl diphosphate (DMAPP). This Ruegeria pomeroyi (strain ATCC 700808 / DSM 15171 / DSS-3) (Silicibacter pomeroyi) protein is Isopentenyl-diphosphate Delta-isomerase.